A 466-amino-acid polypeptide reads, in one-letter code: MKGLVFLLGLLPTIYASLVHITPASEDDFYNPPAGFESAKNGDILKLRNSPNRLASFYFPIDVKNAWQLLVKSEDSFGNPNAFVTTLIEPYNADPSKVVSYQTWEDASNINCSPSYGAQFGSPLSTITTQIDMTLIVPPLRSGYYVVTPDYEGPKATFAVGRQSGQATLDSVRAILKSGSFSGINEDAKVALWGYSGGSLATGWAAALQPVYAPELQKNIVGAAVGGFAANITAIAESVDGTIFAGLITLALNGLANEYPDLKTAFYEELSDFAVPEFKAGAENCLAENIFHYPLHQYFTGPKRAFEKGWGLLKEDIFNKSIQDNLLIGLNKTYLPQVPVLIYHGTVDEIIPIKDPHAQYQLWCDWGIESLEFAEDLSTGHLAETFTGAPAALAWIDARFDGKTPIQGCSHTTRLTNLLYPNTSDSTHSYFLGIYQAVFGTPLGPGINGDNITINSGLLGLVSSII.

Residues 1-16 (MKGLVFLLGLLPTIYA) form the signal peptide. A disulfide bond links Cys112 and Cys285. The active-site Charge relay system is Ser196. N-linked (GlcNAc...) asparagine glycans are attached at residues Asn231, Asn319, and Asn331. Active-site charge relay system residues include Asp348 and His381. A disulfide bond links Cys364 and Cys409. N-linked (GlcNAc...) asparagine glycans are attached at residues Asn422 and Asn451.

The protein belongs to the AB hydrolase superfamily. Lipase family. Class Lip subfamily.

Its subcellular location is the secreted. The catalysed reaction is a triacylglycerol + H2O = a diacylglycerol + a fatty acid + H(+). Functionally, secreted lipase that is able to hydrolyze both the neutral triacylglycerols and the monopalmitate ester Tween 40, allowing the use of hydrolyzed products as carbon sources. Has broad lipolytic activity, which may be important for colonization and subsequent infection, therefore contributing to the persistence and virulence in human tissue. My be important for alimentary tract colonization, but not oral infection. Facilitates invasive disease via lipid-based suppression of the IL-17 response. Inhibits IL-17 production indirectly by suppressing IL-23 production by tissue-resident dendritic cells. In Candida albicans (strain SC5314 / ATCC MYA-2876) (Yeast), this protein is Lipase 2.